Consider the following 283-residue polypeptide: ATP synthase gamma chain (283 aa).

Belongs to the ATPase gamma chain family. In terms of assembly, F-type ATPases have 2 components, CF(1) - the catalytic core - and CF(0) - the membrane proton channel. CF(1) has five subunits: alpha(3), beta(3), gamma(1), delta(1), epsilon(1). CF(0) has three main subunits: a, b and c.

The protein resides in the cell membrane. In terms of biological role, produces ATP from ADP in the presence of a proton gradient across the membrane. The gamma chain is believed to be important in regulating ATPase activity and the flow of protons through the CF(0) complex. The polypeptide is ATP synthase gamma chain (Exiguobacterium sibiricum (strain DSM 17290 / CCUG 55495 / CIP 109462 / JCM 13490 / 255-15)).